Consider the following 963-residue polypeptide: Non-ribosomal peptide synthetase CmlP (963 aa).

The Carrier domain maps to 492–568 (GEDAAELRRV…AAFLRHLRGE (77 aa)). Ser526 is modified (O-(pantetheine 4'-phosphoryl)serine). The segment at 928-963 (GRLLGTPPDTPAGDRPERTGTTAEAQNGAAHAPTPR) is disordered.

It belongs to the ATP-dependent AMP-binding enzyme family. The cofactor is pantetheine 4'-phosphate.

The enzyme catalyses 4-amino-L-phenylalanine + holo-[peptidyl-carrier protein] + ATP = 4-amino-L-phenylalanyl-[peptidyl-carrier protein] + AMP + diphosphate. It participates in antibiotic biosynthesis. Its function is as follows. Involved in chloramphenicol biosynthesis. Activates 4-amino-L-phenylalanine by adenylation and loads it onto its peptidyl carrier domain, via a thioester linkage to the phosphopanthetheine moiety. Can also adenylate tyrosine and phenylalanine at low rates, but not L-p-nitrophenylalanine or threo-phenylserine. The polypeptide is Non-ribosomal peptide synthetase CmlP (Streptomyces venezuelae (strain ATCC 10712 / CBS 650.69 / DSM 40230 / JCM 4526 / NBRC 13096 / PD 04745)).